The sequence spans 262 residues: Nickel import ATP-binding protein NikD (262 aa).

In terms of domain architecture, ABC transporter spans 6–249 (LAIEGLTATT…PGHEVTRMLV (244 aa)). 42–49 (GASGSGKS) contributes to the ATP binding site.

It belongs to the ABC transporter superfamily. Nickel importer (TC 3.A.1.5.3) family. The complex is composed of two ATP-binding proteins (NikD and NikE), two transmembrane proteins (NikB and NikC) and a solute-binding protein (NikA).

The protein localises to the cell inner membrane. The catalysed reaction is Ni(2+)(out) + ATP + H2O = Ni(2+)(in) + ADP + phosphate + H(+). Part of the ABC transporter complex NikABCDE involved in nickel import. Responsible for energy coupling to the transport system. The polypeptide is Nickel import ATP-binding protein NikD (Brucella suis biovar 1 (strain 1330)).